We begin with the raw amino-acid sequence, 1504 residues long: DNA polymerase zeta catalytic subunit (1504 aa).

4 residues coordinate Zn(2+): cysteine 1398, cysteine 1401, cysteine 1414, and cysteine 1417. The CysA-type zinc finger occupies 1398 to 1417; it reads CCNCGEELTKICSLQLCDDC. Residues cysteine 1446, cysteine 1449, cysteine 1468, and cysteine 1473 each coordinate [4Fe-4S] cluster. Positions 1446–1473 match the CysB motif motif; sequence CRTCSYRYTSDAGIENDHIASKCNSYDC.

Belongs to the DNA polymerase type-B family. As to quaternary structure, forms DNA polymerase zeta with REV7. It depends on [4Fe-4S] cluster as a cofactor.

It localises to the mitochondrion. Its subcellular location is the nucleus. The enzyme catalyses DNA(n) + a 2'-deoxyribonucleoside 5'-triphosphate = DNA(n+1) + diphosphate. Its function is as follows. Nonessential DNA polymerase. Required for DNA damage induced mutagenesis. Involved in DNA repair, mitochondrial DNA repair and translesion synthesis. Translesion synthesis in S.cerevisiae may use a specialized DNA polymerase that is not required for other DNA replicative processes. Has a role in the bypass of abasic (AP) sites. Highly inefficient in incorporating nucleotides opposite the AP site, but efficiently extends from nucleotides, particularly an A, inserted opposite the lesion. This chain is DNA polymerase zeta catalytic subunit (REV3), found in Saccharomyces cerevisiae (strain ATCC 204508 / S288c) (Baker's yeast).